The following is a 275-amino-acid chain: MAVKKYKPYTPSRRFMSVVDSSDITAKPSVRKLLVKLPARAGRNNQGRITSRHREAGAKKLYRIIDFKRNKYGVPGRVATIEYDPYRNCRIALVVYRDGDKRYIIQPSGLKVGDTVEAAEAGLDVLPGNAMKLKNIPVGTLVHNIEMKPGKGGQLARSAGAYAQIMGREDKYVILRLPSGEMRKILGECMATIGVVGNEEYANIVIGKAGRNRHRGIRPQTRGSAMNPVDHPHGGGEGKTGPSGHPVTPWGMPTKGYKTRRKKPSDKLIISRRKK.

The segment at 212–275 (NRHRGIRPQT…DKLIISRRKK (64 aa)) is disordered. Positions 257-275 (YKTRRKKPSDKLIISRRKK) are enriched in basic residues.

The protein belongs to the universal ribosomal protein uL2 family. In terms of assembly, part of the 50S ribosomal subunit. Forms a bridge to the 30S subunit in the 70S ribosome.

Functionally, one of the primary rRNA binding proteins. Required for association of the 30S and 50S subunits to form the 70S ribosome, for tRNA binding and peptide bond formation. It has been suggested to have peptidyltransferase activity; this is somewhat controversial. Makes several contacts with the 16S rRNA in the 70S ribosome. The protein is Large ribosomal subunit protein uL2 of Nitratiruptor sp. (strain SB155-2).